We begin with the raw amino-acid sequence, 285 residues long: Nucleotide-binding protein Pmen_0867 (285 aa).

Position 8–15 (8–15 (GRSGSGKS)) interacts with ATP. 60–63 (DARN) is a binding site for GTP.

Belongs to the RapZ-like family.

Functionally, displays ATPase and GTPase activities. This chain is Nucleotide-binding protein Pmen_0867, found in Ectopseudomonas mendocina (strain ymp) (Pseudomonas mendocina).